Here is a 281-residue protein sequence, read N- to C-terminus: NAD kinase (281 aa).

D61 functions as the Proton acceptor in the catalytic mechanism. Residues 61 to 62 (DG), 134 to 135 (ND), R145, D164, 175 to 180 (TAYSLS), and Q234 each bind NAD(+).

This sequence belongs to the NAD kinase family. It depends on a divalent metal cation as a cofactor.

The protein localises to the cytoplasm. It catalyses the reaction NAD(+) + ATP = ADP + NADP(+) + H(+). In terms of biological role, involved in the regulation of the intracellular balance of NAD and NADP, and is a key enzyme in the biosynthesis of NADP. Catalyzes specifically the phosphorylation on 2'-hydroxyl of the adenosine moiety of NAD to yield NADP. In Clostridium botulinum (strain Kyoto / Type A2), this protein is NAD kinase.